A 546-amino-acid chain; its full sequence is Chaperonin GroEL 2 (546 aa).

Residues 29–32 (TLGP), 86–90 (DGTTT), Gly-418, 482–484 (NAA), and Asp-498 each bind ATP.

The protein belongs to the chaperonin (HSP60) family. As to quaternary structure, forms a cylinder of 14 subunits composed of two heptameric rings stacked back-to-back. Interacts with the co-chaperonin GroES.

Its subcellular location is the cytoplasm. The enzyme catalyses ATP + H2O + a folded polypeptide = ADP + phosphate + an unfolded polypeptide.. Functionally, together with its co-chaperonin GroES, plays an essential role in assisting protein folding. The GroEL-GroES system forms a nano-cage that allows encapsulation of the non-native substrate proteins and provides a physical environment optimized to promote and accelerate protein folding. In Corynebacterium diphtheriae (strain ATCC 700971 / NCTC 13129 / Biotype gravis), this protein is Chaperonin GroEL 2.